The sequence spans 495 residues: Meiosis-specific nuclear structural protein 1 (495 aa).

Residues 1–315 are interaction with BBOF1; that stretch reads MASIRRTLSF…RLEEMLRQRE (315 aa). Coiled coils occupy residues 61–215 and 245–361; these read QDEQ…EKLM and IEEF…QMAL. Positions 172–199 are disordered; the sequence is EESAAEDKRNQAKAQYSHDLEKQLEEQG.

The protein belongs to the MNS1 family. In terms of assembly, able to form oligomers. Microtubule inner protein component of sperm flagellar doublet microtubules. Interacts with ODAD1. Interacts with BBOF1. As to expression, expressed in trachea multiciliated cells.

It localises to the nucleus. It is found in the cytoplasm. The protein localises to the cytoskeleton. Its subcellular location is the cilium axoneme. The protein resides in the flagellum axoneme. In terms of biological role, microtubule inner protein (MIP) part of the dynein-decorated doublet microtubules (DMTs) in cilia axoneme, which is required for motile cilia beating. May play a role in the control of meiotic division and germ cell differentiation through regulation of pairing and recombination during meiosis. Required for sperm flagella assembly. May play a role in the assembly and function of the outer dynein arm-docking complex (ODA-DC). ODA-DC mediates outer dynein arms (ODA) binding onto the axonemal doublet microtubules. This is Meiosis-specific nuclear structural protein 1 (MNS1) from Bos taurus (Bovine).